Reading from the N-terminus, the 447-residue chain is NADH-quinone oxidoreductase subunit N (447 aa).

Transmembrane regions (helical) follow at residues 4-24 (FAALLPVILLGAGAVTAMLAA), 27-47 (LPGLARWIAGFALVAASVALA), 68-88 (LTGLVVCLSGIGSLAFLRPDG), 92-112 (EGPALLLLATLGGVVLTGAVH), 113-133 (AASLFLGLELITLALVALFVL), 146-166 (FLILGAAAAATLLMGLALGHA), 181-201 (ALLTFAAALLLAGLAFKLALV), 215-235 (PGAAAAFAGAASKVAVVTALV), 245-265 (VWALGLGTFAGVSILLGNLAA), 280-300 (VGHAGYIAAALATGAASAPAA), 302-322 (LFYIVTYAPALLAALCVAALI), 342-362 (GAAMAAALVSLAGLPVSAGFF), and 376-395 (AWALLALAIAGSALGAYYYL).

The protein belongs to the complex I subunit 2 family. As to quaternary structure, NDH-1 is composed of 14 different subunits. Subunits NuoA, H, J, K, L, M, N constitute the membrane sector of the complex.

The protein resides in the cell inner membrane. The enzyme catalyses a quinone + NADH + 5 H(+)(in) = a quinol + NAD(+) + 4 H(+)(out). NDH-1 shuttles electrons from NADH, via FMN and iron-sulfur (Fe-S) centers, to quinones in the respiratory chain. The immediate electron acceptor for the enzyme in this species is believed to be ubiquinone. Couples the redox reaction to proton translocation (for every two electrons transferred, four hydrogen ions are translocated across the cytoplasmic membrane), and thus conserves the redox energy in a proton gradient. The chain is NADH-quinone oxidoreductase subunit N from Cereibacter sphaeroides (strain ATCC 17025 / ATH 2.4.3) (Rhodobacter sphaeroides).